The chain runs to 481 residues: UDP-glycosyltransferase 88F4 (481 aa).

Residues Ser-288, Trp-357–Ala-358, His-375–Glu-383, and Tyr-397–Gln-400 each bind UDP-alpha-D-glucose.

Belongs to the UDP-glycosyltransferase family.

Functionally, glycosyltransferase that may possess chalcone and dihydrochalcone 2'-O-glucosyltransferase activity. The sequence is that of UDP-glycosyltransferase 88F4 from Malus domestica (Apple).